The primary structure comprises 109 residues: UPF0060 membrane protein PSPA7_1846 (109 aa).

4 consecutive transmembrane segments (helical) span residues leucine 5–leucine 25, leucine 27–leucine 47, alanine 59–glutamate 79, and leucine 84–glycine 104.

The protein belongs to the UPF0060 family.

The protein resides in the cell inner membrane. The polypeptide is UPF0060 membrane protein PSPA7_1846 (Pseudomonas paraeruginosa (strain DSM 24068 / PA7) (Pseudomonas aeruginosa (strain PA7))).